Reading from the N-terminus, the 370-residue chain is Glutamate 5-kinase (370 aa).

An ATP-binding site is contributed by K12. 3 residues coordinate substrate: S52, D139, and N151. Residues 171–172 (SD) and 213–219 (TGGMFTK) each bind ATP. Residues 278–356 (QAHIAVDAGA…SDIESILGYS (79 aa)) enclose the PUA domain.

It belongs to the glutamate 5-kinase family.

The protein localises to the cytoplasm. The enzyme catalyses L-glutamate + ATP = L-glutamyl 5-phosphate + ADP. It functions in the pathway amino-acid biosynthesis; L-proline biosynthesis; L-glutamate 5-semialdehyde from L-glutamate: step 1/2. Functionally, catalyzes the transfer of a phosphate group to glutamate to form L-glutamate 5-phosphate. This chain is Glutamate 5-kinase, found in Herpetosiphon aurantiacus (strain ATCC 23779 / DSM 785 / 114-95).